A 311-amino-acid polypeptide reads, in one-letter code: Putative ABC transporter ATP-binding protein MG467 (311 aa).

An ABC transporter domain is found at Ile84–Leu310. Residue Gly122–Thr129 participates in ATP binding.

Belongs to the ABC transporter superfamily.

This is Putative ABC transporter ATP-binding protein MG467 from Mycoplasma genitalium (strain ATCC 33530 / DSM 19775 / NCTC 10195 / G37) (Mycoplasmoides genitalium).